The primary structure comprises 283 residues: NFU1 iron-sulfur cluster scaffold homolog, mitochondrial (283 aa).

The transit peptide at 1–65 directs the protein to the mitochondrion; sequence MSKFLSQAAI…ELRMPVACRR (65 aa). The segment at 182 to 250 is nifU; the sequence is IKELLDTRIR…IPEVESVEQV (69 aa). The [4Fe-4S] cluster site is built by Cys-219 and Cys-222.

This sequence belongs to the NifU family.

Its subcellular location is the mitochondrion. Molecular scaffold for [Fe-S] cluster assembly of mitochondrial iron-sulfur proteins. The protein is NFU1 iron-sulfur cluster scaffold homolog, mitochondrial of Drosophila sechellia (Fruit fly).